The primary structure comprises 582 residues: Cryptochrome DASH, chloroplastic/mitochondrial (582 aa).

A chloroplast and mitochondrion-targeting transit peptide spans 1–49 (MLHFLSSSSPLNPQFLLLPRQSARLRVLLSIPVSAMSSSSSSSSRGALA). The Photolyase/cryptochrome alpha/beta domain occupies 84 to 234 (GVAIVWFRND…KLQLIWGATL (151 aa)). The interval 560–582 (GHQKRDQQFNRQRRPGHMYRRQK) is disordered. Basic residues predominate over residues 570 to 582 (RQRRPGHMYRRQK).

It belongs to the DNA photolyase class-1 family. It depends on FAD as a cofactor. (6R)-5,10-methylene-5,6,7,8-tetrahydrofolate is required as a cofactor.

Its subcellular location is the plastid. It localises to the chloroplast. It is found in the mitochondrion. In terms of biological role, may have a photoreceptor function. Binds ss- and ds-DNA in a sequence non-specific manner, lacks photolyase activity. This is Cryptochrome DASH, chloroplastic/mitochondrial (CRYD) from Oryza sativa subsp. japonica (Rice).